The chain runs to 689 residues: DNA ligase (689 aa).

NAD(+) contacts are provided by residues aspartate 40–aspartate 44, serine 89–leucine 90, and glutamate 121. The N6-AMP-lysine intermediate role is filled by lysine 123. Residues arginine 144, glutamate 179, lysine 295, and lysine 319 each contribute to the NAD(+) site. Residues cysteine 413, cysteine 416, cysteine 431, and cysteine 437 each contribute to the Zn(2+) site. The BRCT domain maps to arginine 610–isoleucine 689.

Belongs to the NAD-dependent DNA ligase family. LigA subfamily. Requires Mg(2+) as cofactor. The cofactor is Mn(2+).

The enzyme catalyses NAD(+) + (deoxyribonucleotide)n-3'-hydroxyl + 5'-phospho-(deoxyribonucleotide)m = (deoxyribonucleotide)n+m + AMP + beta-nicotinamide D-nucleotide.. Its function is as follows. DNA ligase that catalyzes the formation of phosphodiester linkages between 5'-phosphoryl and 3'-hydroxyl groups in double-stranded DNA using NAD as a coenzyme and as the energy source for the reaction. It is essential for DNA replication and repair of damaged DNA. The chain is DNA ligase from Rickettsia bellii (strain OSU 85-389).